We begin with the raw amino-acid sequence, 487 residues long: Glycogen synthase (487 aa).

K23 is a binding site for ADP-alpha-D-glucose.

This sequence belongs to the glycosyltransferase 1 family. Bacterial/plant glycogen synthase subfamily.

The enzyme catalyses [(1-&gt;4)-alpha-D-glucosyl](n) + ADP-alpha-D-glucose = [(1-&gt;4)-alpha-D-glucosyl](n+1) + ADP + H(+). It functions in the pathway glycan biosynthesis; glycogen biosynthesis. Functionally, synthesizes alpha-1,4-glucan chains using ADP-glucose. This is Glycogen synthase from Pseudomonas fluorescens (strain Pf0-1).